The sequence spans 1002 residues: MDRPNTPSRPPEYTLPSYEDEHDTPTGQNPAAVRLLTSFEDPFDHSSKSSPRANLRPRTTRRSYQPSVVSSHSRSASVLDEAPSMPPPDSSYVPFAHRETSSPHRPWTPSSRVSEFSRPPPSNVSYEPSDLNGSPRPGTPSSRYGGSPRRPLPPAPLFSNPGRTSQAFADDATVSIPLDGSDDVFGPETDLSDSRPLPTHRDSFMSGSQETLNEDAEDYVKVEHYGPAPDGAQERRGVRAPQMSKKEVQLINGELVLECKIPTILYSFLPRRNEVEFTHMRYTAVTCDPDDFVERGYNLRQSIGRTTRETELFICITMYNEDEICFTRTMHAVMKNISHFCSRSRSRTWGENGWQKIVVCIISDGREKIHPRTLDALAAMGVYQHGIAKNFVNNRAVQAHVYEYTTQVSLDADLKFKGAEKGIVPCQLIFCLKEKNSRKLNSHRWFFNAFGKALNPNVCILLDVGTRPGSNSLYHLWKAFDTDSNVAGACGEIKAMKGRFGSNLLNPLVASQNFEYKLSNILDKPLESVFGYITVLPGALSAYRYHALQNDETGHGPLSQYFKGETLHGQHADVFTANMYLAEDRILCWELVAKRGERWVLKYVKSCTGETDVPDAVPEFISQRRRWLNGAFFAAVYSLVQFRQILATDHTIARKILLYIEFVYQFVQLLFTYFSLANFYLTFYFVAGGLTDKTVDPFGHNIGSVIFTILRYTCVLLIATQFILSLGNRPQGAKKLYLASMIIYGVIMTYTSFACIYIVVRQLTGKSQDFAIGNNVFTNLIVSMASTIGLYFVMSFLYLEPWHMFTSSLQYFLLLPSYICTLQVYAFCNTHDVTWGTKGDNVIKTDLGGAVGKGETVELEMPSEQLDIDSGYDEALRNLRDRLAVPGSPVSEAQMQEDYYKSVRTYMVVTWMIANGILAMAVSEIYSNKGIGDNFYLRFILWAVASLAIFRALGSTTFAIINVVNIVVEGRIRMNVKVPSWMGGFGSKISEKVSSVGSSLKS.

Disordered regions lie at residues 1–165 (MDRP…GRTS) and 178–209 (LDGS…SGSQ). Residues 63 to 78 (SYQPSVVSSHSRSASV) are compositionally biased toward low complexity. N-linked (GlcNAc...) asparagine glycosylation occurs at Asn-123. Asn-336 carries N-linked (GlcNAc...) asparagine glycosylation. The next 8 membrane-spanning stretches (helical) occupy residues 627-647 (WLNG…QILA), 669-689 (LLFT…VAGG), 704-724 (SVIF…QFIL), 740-760 (SMII…YIVV), 780-800 (LIVS…LYLE), 808-828 (SLQY…YAFC), 906-926 (YMVV…SEIY), and 940-960 (ILWA…TFAI).

This sequence belongs to the chitin synthase family. Class II subfamily. In terms of tissue distribution, expressed in hyphal bodies.

It localises to the cell membrane. The enzyme catalyses [(1-&gt;4)-N-acetyl-beta-D-glucosaminyl](n) + UDP-N-acetyl-alpha-D-glucosamine = [(1-&gt;4)-N-acetyl-beta-D-glucosaminyl](n+1) + UDP + H(+). Its function is as follows. Polymerizes chitin, a structural polymer of the cell wall and septum, by transferring the sugar moiety of UDP-GlcNAc to the non-reducing end of the growing chitin polymer. Contributes to the production of conidia and the ability of fungal conidia to germinate. Involved in fungal stress tolerances. In Metarhizium acridum (strain CQMa 102), this protein is Chitin synthase II.